The chain runs to 189 residues: Putative ankyrin repeat protein TV1425 (189 aa).

ANK repeat units follow at residues 31 to 60 (YNRTPLMVACMLGMENAIDKLVENFDKLED), 64 to 93 (EGSTALIWAVKNNRLGIAEKLLSKGSNVNT), 97 to 126 (SGKTPLMWSIIFGYSEMSYFLLEHGANVND), and 130 to 159 (EGETPLIVASKYGRSEIVKKLLELGADISA).

The sequence is that of Putative ankyrin repeat protein TV1425 from Thermoplasma volcanium (strain ATCC 51530 / DSM 4299 / JCM 9571 / NBRC 15438 / GSS1).